We begin with the raw amino-acid sequence, 273 residues long: Glutamate racemase (273 aa).

Residues 11–12 (DS) and 43–44 (YG) each bind substrate. Residue C74 is the Proton donor/acceptor of the active site. 75-76 (NT) is a binding site for substrate. Catalysis depends on C185, which acts as the Proton donor/acceptor. Residue 186-187 (TH) participates in substrate binding.

It belongs to the aspartate/glutamate racemases family.

The catalysed reaction is L-glutamate = D-glutamate. Its pathway is cell wall biogenesis; peptidoglycan biosynthesis. In terms of biological role, provides the (R)-glutamate required for cell wall biosynthesis. The sequence is that of Glutamate racemase from Lactiplantibacillus plantarum (strain ATCC BAA-793 / NCIMB 8826 / WCFS1) (Lactobacillus plantarum).